The chain runs to 793 residues: Potassium transporter 18 (793 aa).

Residues 1–53 are Cytoplasmic-facing; the sequence is METRTNEYSRKGAMWELERNLDQPMDAEAGRLRNMYREKTYPTILLLRLAFQS. The helical transmembrane segment at 54 to 74 threads the bilayer; it reads LGVVFGDLGTSPLYVFYNIFP. Residues 75 to 86 lie on the Extracellular side of the membrane; it reads HGIEDTEQVIGA. A helical transmembrane segment spans residues 87–107; it reads LSLIIYSLTLIPLVKYVFIVL. Residues 108-172 are Cytoplasmic-facing; the sequence is RANDNGQGGT…WLEGHQFRKN (65 aa). The helical transmembrane segment at 173–193 threads the bilayer; the sequence is LILILVLFGTCMAVGDGILTP. The Extracellular segment spans residues 194–214; sequence AISVLSATGGIQVEEGRMRND. A helical membrane pass occupies residues 215-235; it reads VVVIISVLILIGLFSMQHYGT. At 236-237 the chain is on the cytoplasmic side; it reads DK. Residues 238-258 form a helical membrane-spanning segment; that stretch reads VSWLFAPIVFVWFILIGILGA. Residues 259-287 lie on the Extracellular side of the membrane; that stretch reads VNICKYDHSVLKAFNPVYVYRYFKRGKTS. The chain crosses the membrane as a helical span at residues 288–308; sequence WTSLGGIMLSITGTEALFADL. A topological domain (cytoplasmic) is located at residue serine 309. Residues 310–330 traverse the membrane as a helical segment; sequence YFPVQAIQIAFTVVVFPCLLL. Topologically, residues 331–351 are extracellular; the sequence is QYTGQAAFIAANTNQVSHAFY. Residues 352–372 traverse the membrane as a helical segment; sequence ISLPAPILWPAFAVATAAAIV. Over 373-409 the chain is Cytoplasmic; that stretch reads ASQATISATYSIIKQALALGCFPRVKIIHTSKKYLGQ. A helical transmembrane segment spans residues 410–430; the sequence is IYSPDINWILMVFCIAVTAGF. Topologically, residues 431–442 are extracellular; the sequence is KNQSQIANAYGT. An N-linked (GlcNAc...) asparagine glycan is attached at asparagine 432. The chain crosses the membrane as a helical span at residues 443-463; that stretch reads AVIMVMLVTTFLMIPIMLLVW. At 464–468 the chain is on the cytoplasmic side; the sequence is RSHWT. Residues 469 to 489 traverse the membrane as a helical segment; that stretch reads LVVAFTVLSLLVEIPYFSAVV. Topologically, residues 490–494 are extracellular; sequence RKIDQ. A helical transmembrane segment spans residues 495–515; it reads GGWVPLVFAAGFMIIMYVWHY. Residues 516 to 793 lie on the Cytoplasmic side of the membrane; sequence GTLKRYEFEM…MLNVGQVFYV (278 aa).

Belongs to the HAK/KUP transporter (TC 2.A.72.3) family.

The protein localises to the membrane. Functionally, high-affinity potassium transporter. The polypeptide is Potassium transporter 18 (HAK18) (Oryza sativa subsp. japonica (Rice)).